The sequence spans 389 residues: Na(+)/H(+) antiporter NhaA (389 aa).

Transmembrane regions (helical) follow at residues 17-37, 59-79, 95-115, 124-144, 154-174, 177-197, 213-233, 261-281, 287-307, 328-348, and 363-383; these read ILLLVAVALAMLMANSPLAGL, LLLWINDGLMALFFLLIGLEV, SLPTFAAIGGMLVPAGIYLLF, AGWAIPAATDIAFALGIMALL, VFLLALAIIDDLGVIVIIALF, TDLSTISLIIASIAIVGLVAL, LVLWVAVLKSGVHATLAGVII, FLILPVFAFANAGVALGNMSL, PVPVGIALGLMLGKPIGVMLF, IAPVAAMCGIGFTMSMFIASL, and LGTLIGSILAALIGYFWLSKV.

Belongs to the NhaA Na(+)/H(+) (TC 2.A.33) antiporter family.

The protein localises to the cell inner membrane. It catalyses the reaction Na(+)(in) + 2 H(+)(out) = Na(+)(out) + 2 H(+)(in). Its function is as follows. Na(+)/H(+) antiporter that extrudes sodium in exchange for external protons. The sequence is that of Na(+)/H(+) antiporter NhaA from Shewanella sp. (strain MR-4).